Consider the following 766-residue polypeptide: 5-methyltetrahydropteroyltriglutamate--homocysteine methyltransferase (766 aa).

5-methyltetrahydropteroyltri-L-glutamate-binding positions include R16–K19 and K124. L-homocysteine is bound by residues I445–S447 and E498. L-methionine-binding positions include I445–S447 and E498. 5-methyltetrahydropteroyltri-L-glutamate contacts are provided by residues R529 to C530 and W575. Residue D613 coordinates L-homocysteine. An L-methionine-binding site is contributed by D613. Position 619 (E619) interacts with 5-methyltetrahydropteroyltri-L-glutamate. Zn(2+) is bound by residues H655, C657, and E679. The active-site Proton donor is the H708. C740 lines the Zn(2+) pocket.

Belongs to the vitamin-B12 independent methionine synthase family. Requires Zn(2+) as cofactor.

It catalyses the reaction 5-methyltetrahydropteroyltri-L-glutamate + L-homocysteine = tetrahydropteroyltri-L-glutamate + L-methionine. Its pathway is amino-acid biosynthesis; L-methionine biosynthesis via de novo pathway; L-methionine from L-homocysteine (MetE route): step 1/1. Catalyzes the transfer of a methyl group from 5-methyltetrahydrofolate to homocysteine resulting in methionine formation. The sequence is that of 5-methyltetrahydropteroyltriglutamate--homocysteine methyltransferase from Pseudomonas syringae pv. tomato (strain ATCC BAA-871 / DC3000).